Here is a 186-residue protein sequence, read N- to C-terminus: Ribosome-recycling factor (186 aa).

It belongs to the RRF family.

It is found in the cytoplasm. In terms of biological role, responsible for the release of ribosomes from messenger RNA at the termination of protein biosynthesis. May increase the efficiency of translation by recycling ribosomes from one round of translation to another. This chain is Ribosome-recycling factor, found in Brucella abortus (strain S19).